Consider the following 429-residue polypeptide: Serine--tRNA ligase (429 aa).

235–237 (TAE) provides a ligand contact to L-serine. An ATP-binding site is contributed by 266–268 (RSE). Position 289 (glutamate 289) interacts with L-serine. 353–356 (EISS) serves as a coordination point for ATP. Serine 389 is an L-serine binding site.

Belongs to the class-II aminoacyl-tRNA synthetase family. Type-1 seryl-tRNA synthetase subfamily. Homodimer. The tRNA molecule binds across the dimer.

It localises to the cytoplasm. The enzyme catalyses tRNA(Ser) + L-serine + ATP = L-seryl-tRNA(Ser) + AMP + diphosphate + H(+). It catalyses the reaction tRNA(Sec) + L-serine + ATP = L-seryl-tRNA(Sec) + AMP + diphosphate + H(+). Its pathway is aminoacyl-tRNA biosynthesis; selenocysteinyl-tRNA(Sec) biosynthesis; L-seryl-tRNA(Sec) from L-serine and tRNA(Sec): step 1/1. Catalyzes the attachment of serine to tRNA(Ser). Is also able to aminoacylate tRNA(Sec) with serine, to form the misacylated tRNA L-seryl-tRNA(Sec), which will be further converted into selenocysteinyl-tRNA(Sec). This chain is Serine--tRNA ligase, found in Haemophilus influenzae (strain PittEE).